The sequence spans 264 residues: Occludin/ELL domain-containing protein 1 (264 aa).

The span at 1-10 (MHNPDGSASP) shows a compositional bias: polar residues. Residues 1–112 (MHNPDGSASP…QPGPHKAKTK (112 aa)) form a disordered region. Residues 96–105 (PRPPCQPQPG) are compositionally biased toward pro residues. The OCEL domain maps to 147-257 (PDYELKYPPV…QIQKFDDQGD (111 aa)).

This sequence belongs to the ELL/occludin family.

This is Occludin/ELL domain-containing protein 1 (OCEL1) from Homo sapiens (Human).